A 353-amino-acid chain; its full sequence is GDSL esterase/lipase APG (353 aa).

The N-terminal stretch at 1–25 is a signal peptide; the sequence is MDRCTSSFLLLTLVSTLSILQISFA. S37 (nucleophile) is an active-site residue. 2 N-linked (GlcNAc...) asparagine glycosylation sites follow: N197 and N320. Residues D328 and H331 contribute to the active site.

It belongs to the 'GDSL' lipolytic enzyme family.

Its subcellular location is the secreted. The chain is GDSL esterase/lipase APG (APG) from Arabidopsis thaliana (Mouse-ear cress).